Consider the following 449-residue polypeptide: Cytochrome P450 2E1 (449 aa).

Substrate is bound at residue 254–259 (FAGTET). Cys-393 is a binding site for heme.

The protein belongs to the cytochrome P450 family. As to quaternary structure, interacts with chaperones HSP70 and HSP90; this interaction is required for initial targeting to mitochondria. It depends on heme as a cofactor.

It localises to the endoplasmic reticulum membrane. It is found in the microsome membrane. The protein localises to the mitochondrion inner membrane. The catalysed reaction is an organic molecule + reduced [NADPH--hemoprotein reductase] + O2 = an alcohol + oxidized [NADPH--hemoprotein reductase] + H2O + H(+). It catalyses the reaction (5Z,8Z,11Z)-eicosatrienoate + reduced [NADPH--hemoprotein reductase] + O2 = 19-hydroxy-(5Z,8Z,11Z)-eicosatrienoate + oxidized [NADPH--hemoprotein reductase] + H2O + H(+). It carries out the reaction (5Z,8Z,11Z,14Z,17Z)-eicosapentaenoate + reduced [NADPH--hemoprotein reductase] + O2 = 19-hydroxy-(5Z,8Z,11Z,14Z,17Z)-eicosapentaenoate + oxidized [NADPH--hemoprotein reductase] + H2O + H(+). The enzyme catalyses (4Z,7Z,10Z,13Z,16Z,19Z)-docosahexaenoate + reduced [NADPH--hemoprotein reductase] + O2 = 21-hydroxy-(4Z,7Z,10Z,13Z,16Z,19Z)-docosahexaenoate + oxidized [NADPH--hemoprotein reductase] + H2O + H(+). The catalysed reaction is dodecanoate + reduced [NADPH--hemoprotein reductase] + O2 = 11-hydroxydodecanoate + oxidized [NADPH--hemoprotein reductase] + H2O + H(+). It catalyses the reaction tetradecanoate + reduced [NADPH--hemoprotein reductase] + O2 = 13-hydroxytetradecanoate + oxidized [NADPH--hemoprotein reductase] + H2O + H(+). It carries out the reaction 4-nitrophenol + NADPH + O2 + H(+) = 4-nitrocatechol + NADP(+) + H2O. The protein operates within lipid metabolism; fatty acid metabolism. The omega-1 hydroxylase activity is stimulated by cytochrome b5. Its function is as follows. A cytochrome P450 monooxygenase involved in the metabolism of fatty acids. Mechanistically, uses molecular oxygen inserting one oxygen atom into a substrate, and reducing the second into a water molecule, with two electrons provided by NADPH via cytochrome P450 reductase (NADPH--hemoprotein reductase). Catalyzes the hydroxylation of carbon-hydrogen bonds. Hydroxylates fatty acids specifically at the omega-1 position displaying the highest catalytic activity for saturated fatty acids. May be involved in the oxidative metabolism of xenobiotics. This Macaca fascicularis (Crab-eating macaque) protein is Cytochrome P450 2E1 (CYP2E1).